Here is an 83-residue protein sequence, read N- to C-terminus: uncharacterized protein (83 aa).

Positions 57–83 are disordered; the sequence is ESVEEEEEFEDYDEFEEEEEYYYDDEY.

This is an uncharacterized protein from Archaeoglobus fulgidus (strain ATCC 49558 / DSM 4304 / JCM 9628 / NBRC 100126 / VC-16).